The sequence spans 413 residues: uncharacterized protein (413 aa).

At lysine 265 the chain carries N6-(pyridoxal phosphate)lysine.

It belongs to the threonine aldolase family. The cofactor is pyridoxal 5'-phosphate.

This is an uncharacterized protein from Caenorhabditis elegans.